The following is a 266-amino-acid chain: Interleukin-1 beta (266 aa).

A propeptide spanning residues 1-114 (MAAVPELTSE…KTDADNFMSD (114 aa)) is cleaved from the precursor.

This sequence belongs to the IL-1 family. In terms of assembly, monomer. In its precursor form, weakly interacts with full-length MEFV; the mature cytokine does not interact at all. Interacts with integrins ITGAV:ITGBV and ITGA5:ITGB1; integrin-binding is required for IL1B signaling. Interacts with cargo receptor TMED10; the interaction is direct and is required for the secretion of IL1B mature form. Interacts with HSP90AB1; the interaction facilitates cargo translocation into the ERGIC. Interacts with HSP90B1; the interaction facilitates cargo translocation into the ERGIC.

It is found in the cytoplasm. The protein localises to the cytosol. It localises to the secreted. Its subcellular location is the lysosome. The protein resides in the extracellular exosome. Potent pro-inflammatory cytokine. Initially discovered as the major endogenous pyrogen, induces prostaglandin synthesis, neutrophil influx and activation, T-cell activation and cytokine production, B-cell activation and antibody production, and fibroblast proliferation and collagen production. Promotes Th17 differentiation of T-cells. Synergizes with IL12/interleukin-12 to induce IFNG synthesis from T-helper 1 (Th1) cells. Plays a role in angiogenesis by inducing VEGF production synergistically with TNF and IL6. Involved in transduction of inflammation downstream of pyroptosis: its mature form is specifically released in the extracellular milieu by passing through the gasdermin-D (GSDMD) pore. This is Interleukin-1 beta (IL1B) from Canis lupus familiaris (Dog).